The chain runs to 127 residues: MSELVEHIQVHVEPEYQAGESAPGDQRYVFSYTITVHNRSAHSIQLLARHWKITQSSGKVQEVRGKGVIGQQPLIGPGQQFRYTSRAVLDGPVGVMEGSYTCLDTTEQRAFEVPIAAFRLAGPNQVH.

In terms of domain architecture, ApaG spans 2-127 (SELVEHIQVH…FRLAGPNQVH (126 aa)).

The protein is Protein ApaG of Chromohalobacter salexigens (strain ATCC BAA-138 / DSM 3043 / CIP 106854 / NCIMB 13768 / 1H11).